Reading from the N-terminus, the 196-residue chain is Cupin-domain-containing oxidoreductase srdD (196 aa).

The tract at residues 99-165 (DFGPGVESPL…GNGTLPGRVM (67 aa)) is cupin-like domain.

This sequence belongs to the virC family.

Functionally, highly reducing polyketide synthase; part of the gene cluster that mediates the biosynthesis of sordarial, a salicylic aldehyde structurally related to the phytotoxin pyriculol. The most interesting aspect of this pathway is formation of an aromatic product from the highly reducing polyketide synthase srdA. SrdA synthesizes a reduced polyketide chain from one molecule of acetyl-CoA and five molecules of malonyl-CoA. The polyketide chain is then reductively released as an aldehyde. The oxidoreductases srdC, srdD and srdE then oxidize one of the hydroxy groups to facilitate the intramolecular aldol condensation, followed by dehydration to yield a salicylic aldehyde. This aldehyde can undergo facile reduction by endogenous reductases to yield the alcohol 1-hydroxy-2-hydroxymethyl-3-pent-1,3-dienylbenzene. The flavin-dependent srdI counteract against the propensity of the aldehydes to be reduced under physiological conditions and is responsible for reoxidizing 1-hydroxy-2-hydroxymethyl-3-pent-1,3-dienylbenzene back to the salicylic aldehyde. This salicylic aldehyde is then selectively epoxidized by the cupin-domain-containing oxidoreductase srdB to yield the epoxide, which can be hydrolyzed stereoselectively by the hydrolase srdG to give the final product sordarial. This Neurospora crassa (strain ATCC 24698 / 74-OR23-1A / CBS 708.71 / DSM 1257 / FGSC 987) protein is Cupin-domain-containing oxidoreductase srdD.